The sequence spans 261 residues: Proline-rich protein HaeIII subfamily 1 (261 aa).

The first 15 residues, 1-15 (MLVVLFTVALLALSS), serve as a signal peptide directing secretion. A disordered region spans residues 15 to 261 (SAQGPREENQ…PPQGRPQGPR (247 aa)). Pro residues-rich tracts occupy residues 32–44 (QRPPPSGFQPRPP) and 51–237 (GPPP…PPTG). Residues 238-261 (GPQQTPPLAGNTQGPPQGRPQGPR) show a composition bias toward low complexity.

Its subcellular location is the secreted. The chain is Proline-rich protein HaeIII subfamily 1 (Prh1) from Mus musculus (Mouse).